The primary structure comprises 1129 residues: Ubiquitin carboxyl-terminal hydrolase 7 (1129 aa).

In terms of domain architecture, MATH spans 29-169 (EGHLALDIER…DDVIRLRCRF (141 aa)). Residues 190-500 (IGLRNQGATC…SAYMLVYVRD (311 aa)) enclose the USP domain. C199 acts as the Nucleophile in catalysis. H439 serves as the catalytic Proton acceptor.

The protein belongs to the peptidase C19 family.

The protein resides in the nucleus. The catalysed reaction is Thiol-dependent hydrolysis of ester, thioester, amide, peptide and isopeptide bonds formed by the C-terminal Gly of ubiquitin (a 76-residue protein attached to proteins as an intracellular targeting signal).. Its function is as follows. Hydrolase that deubiquitinates target proteins. This chain is Ubiquitin carboxyl-terminal hydrolase 7, found in Caenorhabditis briggsae.